A 45-amino-acid chain; its full sequence is Iota-conotoxin-like R11.12 (45 aa).

Disulfide bonds link Cys5–Cys19, Cys12–Cys22, Cys18–Cys27, and Cys21–Cys36. Residue Leu43 is modified to D-leucine. Residue Arg45 is a propeptide, removed by a carboxypeptidase.

This sequence belongs to the conotoxin I1 superfamily. As to expression, expressed by the venom duct.

It localises to the secreted. Its function is as follows. Iota-conotoxins bind to voltage-gated sodium channels (Nav) and act as agonists by shifting the voltage-dependence of activation to more hyperpolarized levels. Produces general excitatory symptoms. The polypeptide is Iota-conotoxin-like R11.12 (Conus radiatus (Rayed cone)).